The following is a 229-amino-acid chain: Putative N-acetylmannosamine-6-phosphate 2-epimerase (229 aa).

The protein belongs to the NanE family.

The enzyme catalyses an N-acyl-D-glucosamine 6-phosphate = an N-acyl-D-mannosamine 6-phosphate. It participates in amino-sugar metabolism; N-acetylneuraminate degradation; D-fructose 6-phosphate from N-acetylneuraminate: step 3/5. In terms of biological role, converts N-acetylmannosamine-6-phosphate (ManNAc-6-P) to N-acetylglucosamine-6-phosphate (GlcNAc-6-P). This chain is Putative N-acetylmannosamine-6-phosphate 2-epimerase, found in Actinobacillus pleuropneumoniae serotype 5b (strain L20).